The sequence spans 393 residues: F-box/kelch-repeat protein At4g19865 (393 aa).

A disordered region spans residues 1–30 (MNFQVEPPEKKKTKNSSPPHSPPSSSSPSL). An F-box domain is found at 27 to 73 (SPSLSLLPEEIVVHCLARISRLYYPTLSLVSKSFRSILSSTELYATR). Kelch repeat units lie at residues 148–190 (EIYV…FHDG), 191–237 (KIYV…RSGV), 239–272 (EGKIEFGNVNEMCAYDTKLCKWEYCVNKSAALRS), and 273–320 (ECMI…GGSS).

The sequence is that of F-box/kelch-repeat protein At4g19865 from Arabidopsis thaliana (Mouse-ear cress).